The primary structure comprises 445 residues: Phosphoglucosamine mutase (445 aa).

The Phosphoserine intermediate role is filled by S102. The Mg(2+) site is built by S102, D241, D243, and D245. S102 carries the post-translational modification Phosphoserine.

Belongs to the phosphohexose mutase family. Mg(2+) serves as cofactor. Activated by phosphorylation.

The catalysed reaction is alpha-D-glucosamine 1-phosphate = D-glucosamine 6-phosphate. In terms of biological role, catalyzes the conversion of glucosamine-6-phosphate to glucosamine-1-phosphate. This chain is Phosphoglucosamine mutase, found in Escherichia coli O81 (strain ED1a).